A 645-amino-acid chain; its full sequence is DNA mismatch repair protein MutL (645 aa).

Residues 371–403 (VHDQKDKNHDVESHKNNLDSTSSTNNESTEVSN) are disordered. Basic and acidic residues predominate over residues 372 to 387 (HDQKDKNHDVESHKNN). Positions 390–402 (STSSTNNESTEVS) are enriched in low complexity.

Belongs to the DNA mismatch repair MutL/HexB family.

In terms of biological role, this protein is involved in the repair of mismatches in DNA. It is required for dam-dependent methyl-directed DNA mismatch repair. May act as a 'molecular matchmaker', a protein that promotes the formation of a stable complex between two or more DNA-binding proteins in an ATP-dependent manner without itself being part of a final effector complex. The chain is DNA mismatch repair protein MutL from Staphylococcus epidermidis (strain ATCC 35984 / DSM 28319 / BCRC 17069 / CCUG 31568 / BM 3577 / RP62A).